The following is a 732-amino-acid chain: Wall-associated receptor kinase 2 (732 aa).

Positions 1 to 23 (MKVQEGLFVVAVFYLAYTQLVKG) are cleaved as a signal peptide. Residues 24-329 (QPRKECQTRC…RKVRPEYFRW (306 aa)) are Extracellular-facing. Asparagine 57, asparagine 75, asparagine 111, asparagine 154, asparagine 217, and asparagine 246 each carry an N-linked (GlcNAc...) asparagine glycan. In terms of domain architecture, EGF-like 1 spans 230–277 (GDKTCKQVEYRGVCGGNSTCFDSTGGTGYNCKCLEGFEGNPYLPNGCQ). 6 cysteine pairs are disulfide-bonded: cysteine 234/cysteine 249, cysteine 243/cysteine 260, cysteine 262/cysteine 276, cysteine 282/cysteine 295, cysteine 289/cysteine 304, and cysteine 306/cysteine 318. Positions 278 to 319 (DINECISSRHNCSEHSTCENTKGSFNCNCPSGYRKDSLNSCT) constitute an EGF-like 2; calcium-binding domain. N-linked (GlcNAc...) asparagine glycosylation is present at asparagine 288. The helical transmembrane segment at 330-350 (TQIFLGTTIGFSVIMLGISCL) threads the bilayer. Residues 351-732 (QQKIKHRKNT…VTTLDIEAGR (382 aa)) are Cytoplasmic-facing. A Phosphothreonine modification is found at threonine 393. The Protein kinase domain occupies 404–677 (YHESRILGQG…KEVAAELEAL (274 aa)). ATP-binding positions include 410-418 (LGQGGQGTV) and lysine 432. At tyrosine 477 the chain carries Phosphotyrosine. The active-site Proton acceptor is the aspartate 529. Phosphothreonine occurs at positions 563 and 568. Residue tyrosine 576 is modified to Phosphotyrosine.

This sequence belongs to the protein kinase superfamily. Ser/Thr protein kinase family. In terms of tissue distribution, predominantly expressed in green tissues such as stems and leaves. Detected at organ junctions.

It is found in the membrane. It catalyses the reaction L-seryl-[protein] + ATP = O-phospho-L-seryl-[protein] + ADP + H(+). It carries out the reaction L-threonyl-[protein] + ATP = O-phospho-L-threonyl-[protein] + ADP + H(+). In terms of biological role, serine/threonine-protein kinase that may function as a signaling receptor of extracellular matrix component. Binding to pectin may have significance in the control of cell expansion, morphogenesis and development. The chain is Wall-associated receptor kinase 2 (WAK2) from Arabidopsis thaliana (Mouse-ear cress).